The following is a 335-amino-acid chain: Methionine import ATP-binding protein MetN (335 aa).

An ABC transporter domain is found at 2–241 (IQFKDSYKHY…PQHPTTRSFV (240 aa)). 38–45 (GHSGAGKS) provides a ligand contact to ATP.

The protein belongs to the ABC transporter superfamily. Methionine importer (TC 3.A.1.24) family. In terms of assembly, the complex is composed of two ATP-binding proteins (MetN), two transmembrane proteins (MetI) and a solute-binding protein (MetQ).

The protein localises to the cell inner membrane. It catalyses the reaction L-methionine(out) + ATP + H2O = L-methionine(in) + ADP + phosphate + H(+). The enzyme catalyses D-methionine(out) + ATP + H2O = D-methionine(in) + ADP + phosphate + H(+). In terms of biological role, part of the ABC transporter complex MetNIQ involved in methionine import. Responsible for energy coupling to the transport system. The sequence is that of Methionine import ATP-binding protein MetN from Xylella fastidiosa (strain Temecula1 / ATCC 700964).